The chain runs to 556 residues: Formate--tetrahydrofolate ligase (556 aa).

65–72 (TPAGEGKT) provides a ligand contact to ATP.

This sequence belongs to the formate--tetrahydrofolate ligase family.

The catalysed reaction is (6S)-5,6,7,8-tetrahydrofolate + formate + ATP = (6R)-10-formyltetrahydrofolate + ADP + phosphate. Its pathway is one-carbon metabolism; tetrahydrofolate interconversion. In Maricaulis maris (strain MCS10) (Caulobacter maris), this protein is Formate--tetrahydrofolate ligase.